The primary structure comprises 810 residues: Bifunctional aspartokinase/homoserine dehydrogenase 2 (810 aa).

Residues 2-252 (SVIAQAGAKG…VKDACLLPLL (251 aa)) form an aspartokinase region. The interval 253–463 (RLDEASELAR…RAEKRIGLVL (211 aa)) is interface. The homoserine dehydrogenase stretch occupies residues 464–810 (FGKGNIGSRW…SDINRLAQLL (347 aa)). Residues Asn-468 and Ile-469 each coordinate NADP(+). Residues Ile-469 and Val-498 each coordinate NAD(+). Residue Ile-469 coordinates NADPH. Residues Arg-501, Thr-549, and Lys-573 each contribute to the NADP(+) site. Thr-549 contributes to the NAD(+) binding site. 2 residues coordinate NADPH: Thr-549 and Lys-573. Na(+)-binding residues include Val-603, Ala-605, and Leu-607. NADP(+) is bound by residues Gly-658 and Glu-661. 2 residues coordinate L-homoserine: Glu-661 and Asp-672. Lys-676 functions as the Proton donor in the catalytic mechanism. Position 791 (Gly-791) interacts with NADP(+). Gly-791 contacts NAD(+). Gly-791 contributes to the NADPH binding site.

This sequence in the N-terminal section; belongs to the aspartokinase family. In the C-terminal section; belongs to the homoserine dehydrogenase family. In terms of assembly, homotetramer. Requires a metal cation as cofactor.

The catalysed reaction is L-homoserine + NADP(+) = L-aspartate 4-semialdehyde + NADPH + H(+). It carries out the reaction L-homoserine + NAD(+) = L-aspartate 4-semialdehyde + NADH + H(+). It catalyses the reaction L-aspartate + ATP = 4-phospho-L-aspartate + ADP. It participates in amino-acid biosynthesis; L-lysine biosynthesis via DAP pathway; (S)-tetrahydrodipicolinate from L-aspartate: step 1/4. Its pathway is amino-acid biosynthesis; L-methionine biosynthesis via de novo pathway; L-homoserine from L-aspartate: step 1/3. The protein operates within amino-acid biosynthesis; L-methionine biosynthesis via de novo pathway; L-homoserine from L-aspartate: step 3/3. It functions in the pathway amino-acid biosynthesis; L-threonine biosynthesis; L-threonine from L-aspartate: step 1/5. It participates in amino-acid biosynthesis; L-threonine biosynthesis; L-threonine from L-aspartate: step 3/5. Functionally, bifunctional aspartate kinase and homoserine dehydrogenase that catalyzes the first and the third steps toward the synthesis of lysine, methionine and threonine from aspartate. The chain is Bifunctional aspartokinase/homoserine dehydrogenase 2 (metL) from Escherichia coli (strain K12).